The chain runs to 417 residues: Exodeoxyribonuclease 7 large subunit (417 aa).

The protein belongs to the XseA family. As to quaternary structure, heterooligomer composed of large and small subunits.

The protein localises to the cytoplasm. The enzyme catalyses Exonucleolytic cleavage in either 5'- to 3'- or 3'- to 5'-direction to yield nucleoside 5'-phosphates.. Its function is as follows. Bidirectionally degrades single-stranded DNA into large acid-insoluble oligonucleotides, which are then degraded further into small acid-soluble oligonucleotides. In Helicobacter hepaticus (strain ATCC 51449 / 3B1), this protein is Exodeoxyribonuclease 7 large subunit.